A 398-amino-acid polypeptide reads, in one-letter code: 4-hydroxy-3-methylbut-2-en-1-yl diphosphate synthase (ferredoxin) (398 aa).

Residues cysteine 306, cysteine 309, cysteine 340, and glutamate 347 each contribute to the [4Fe-4S] cluster site.

This sequence belongs to the IspG family. The cofactor is [4Fe-4S] cluster.

The catalysed reaction is (2E)-4-hydroxy-3-methylbut-2-enyl diphosphate + 2 oxidized [2Fe-2S]-[ferredoxin] + H2O = 2-C-methyl-D-erythritol 2,4-cyclic diphosphate + 2 reduced [2Fe-2S]-[ferredoxin] + H(+). It participates in isoprenoid biosynthesis; isopentenyl diphosphate biosynthesis via DXP pathway; isopentenyl diphosphate from 1-deoxy-D-xylulose 5-phosphate: step 5/6. Functionally, converts 2C-methyl-D-erythritol 2,4-cyclodiphosphate (ME-2,4cPP) into 1-hydroxy-2-methyl-2-(E)-butenyl 4-diphosphate. The polypeptide is 4-hydroxy-3-methylbut-2-en-1-yl diphosphate synthase (ferredoxin) (Parasynechococcus marenigrum (strain WH8102)).